The primary structure comprises 327 residues: F-box/LRR-repeat protein At3g58900 (327 aa).

The region spanning 1-47 (MDLFSSLPNELLYHILSFLSTKEAALTSVLSKRWRNLFAFVPYLEFD) is the F-box domain. LRR repeat units follow at residues 116–144 (DLFI…RVGS), 161–192 (KTLV…DMTN), 199–230 (NVTV…SFDA), 235–261 (YFYY…QINL), and 277–308 (EMLV…YLSP).

The sequence is that of F-box/LRR-repeat protein At3g58900 from Arabidopsis thaliana (Mouse-ear cress).